Here is a 161-residue protein sequence, read N- to C-terminus: 18.3 kDa class I heat shock protein (161 aa).

The sHSP domain occupies 48–161 (ETAAFANARI…KPQVKAINVY (114 aa)).

It belongs to the small heat shock protein (HSP20) family. Forms oligomeric structures.

It localises to the cytoplasm. The chain is 18.3 kDa class I heat shock protein (HSP18) from Oxybasis rubra (Red goosefoot).